We begin with the raw amino-acid sequence, 321 residues long: Aspartate carbamoyltransferase catalytic subunit (321 aa).

Positions 57 and 58 each coordinate carbamoyl phosphate. Lysine 85 provides a ligand contact to L-aspartate. Arginine 107, histidine 142, and glutamine 145 together coordinate carbamoyl phosphate. The L-aspartate site is built by arginine 175 and arginine 229. Glycine 270 and proline 271 together coordinate carbamoyl phosphate.

This sequence belongs to the aspartate/ornithine carbamoyltransferase superfamily. ATCase family. As to quaternary structure, heterododecamer (2C3:3R2) of six catalytic PyrB chains organized as two trimers (C3), and six regulatory PyrI chains organized as three dimers (R2).

It catalyses the reaction carbamoyl phosphate + L-aspartate = N-carbamoyl-L-aspartate + phosphate + H(+). Its pathway is pyrimidine metabolism; UMP biosynthesis via de novo pathway; (S)-dihydroorotate from bicarbonate: step 2/3. Its function is as follows. Catalyzes the condensation of carbamoyl phosphate and aspartate to form carbamoyl aspartate and inorganic phosphate, the committed step in the de novo pyrimidine nucleotide biosynthesis pathway. This Mycobacterium leprae (strain TN) protein is Aspartate carbamoyltransferase catalytic subunit.